A 365-amino-acid polypeptide reads, in one-letter code: Aminomethyltransferase (365 aa).

This sequence belongs to the GcvT family. In terms of assembly, the glycine cleavage system is composed of four proteins: P, T, L and H.

It catalyses the reaction N(6)-[(R)-S(8)-aminomethyldihydrolipoyl]-L-lysyl-[protein] + (6S)-5,6,7,8-tetrahydrofolate = N(6)-[(R)-dihydrolipoyl]-L-lysyl-[protein] + (6R)-5,10-methylene-5,6,7,8-tetrahydrofolate + NH4(+). In terms of biological role, the glycine cleavage system catalyzes the degradation of glycine. The polypeptide is Aminomethyltransferase (Desulfitobacterium hafniense (strain Y51)).